Here is a 100-residue protein sequence, read N- to C-terminus: Urease subunit gamma (100 aa).

The protein belongs to the urease gamma subunit family. In terms of assembly, heterotrimer of UreA (gamma), UreB (beta) and UreC (alpha) subunits. Three heterotrimers associate to form the active enzyme.

It is found in the cytoplasm. The catalysed reaction is urea + 2 H2O + H(+) = hydrogencarbonate + 2 NH4(+). Its pathway is nitrogen metabolism; urea degradation; CO(2) and NH(3) from urea (urease route): step 1/1. This is Urease subunit gamma from Rhizobium etli (strain CIAT 652).